The sequence spans 1528 residues: Rho GTPase-activating protein 7 (1528 aa).

Disordered stretches follow at residues 72 to 94 (DFPGRPMGHLSKDVDENDSHEGE), 288 to 310 (MSAENGLEKSGFSQHQNKSPPKV), and 372 to 436 (ALST…TKPK). The segment covering 81–94 (LSKDVDENDSHEGE) has biased composition (basic and acidic residues). Low complexity predominate over residues 374-384 (STSSSPSGTPT). Positions 396-436 (GSESGADTISVNQTRVNLSSDTESTDLPSSTPVANSGTKPK) are enriched in polar residues. Residues 448–515 (KAEIEAKEAC…LNKCAVMKLE (68 aa)) form the SAM domain. Phosphoserine is present on residues Ser523, Ser526, and Ser566. Disordered regions lie at residues 558 to 617 (PKQD…ATPR), 732 to 764 (RSVSNSTQTSSSSSQSETSSAVSTPSPVTRTRS), 829 to 876 (PSGN…SSRL), and 928 to 990 (SDEG…GVGA). Low complexity-rich tracts occupy residues 591–605 (VSSVRSLSSTGSLPS) and 734–760 (VSNSTQTSSSSSQSETSSAVSTPSPVT). Positions 710-884 (QLNCVEISAL…RLSIYDNVPG (175 aa)) are focal adhesion-targeting (FAT). The residue at position 757 (Ser757) is a Phosphoserine. Positions 851–862 (LRRENSSDSPKE) are enriched in basic and acidic residues. Over residues 936-948 (ALDSVSPCPSSPK) the composition is skewed to polar residues. The segment covering 950–960 (IHLDVDNDRTT) has biased composition (basic and acidic residues). A compositionally biased stretch (polar residues) spans 961-972 (PSDLDSTGNSLN). The interval 1051 to 1073 (KHGFSWAVPKFMKRIKVPDYKDR) is polybasic cluster (PBR). One can recognise a Rho-GAP domain in the interval 1078–1284 (VPLTVNVQRT…HMIAECKKLF (207 aa)). The START domain maps to 1314 to 1521 (GNDDSADYQH…RDSFSNQNTE (208 aa)).

As to quaternary structure, interacts with EF1A1, facilitates EF1A1 distribution to the membrane periphery and ruffles upon growth factor stimulation and suppresses cell migration. Interacts with tensin TNS1 (via N-terminus); the interaction is decreased by phosphorylation of TNS1. Interacts with TNS3 and PTEN; in resting cells, interacts with TNS3 (via C2 tensin-type domain) but, following growth factor stimulation, TNS3 and PTEN are phosphorylated which leads to weakened interaction with TNS3 and enhanced interaction with PTEN. Interacts (via C-terminus) with tensin TNS4 (via SH2 domain); the interaction is independent of tyrosine phosphorylation of DLC1. As to expression, highest level of expression in the spleen, with rather lower levels in prostate, testis, ovary, small intestine and colon, but none in the thymus.

It localises to the cytoplasm. It is found in the cell junction. Its subcellular location is the focal adhesion. The protein localises to the membrane. Functions as a GTPase-activating protein for the small GTPases RHOA, RHOB, RHOC and CDC42, terminating their downstream signaling. This induces morphological changes and detachment through cytoskeletal reorganization, playing a critical role in biological processes such as cell migration and proliferation. Also functions in vivo as an activator of the phospholipase PLCD1. Active DLC1 increases cell migration velocity but reduces directionality. Required for growth factor-induced epithelial cell migration; in resting cells, interacts with TNS3 while PTEN interacts with the p85 regulatory subunit of the PI3K kinase complex but growth factor stimulation induces phosphorylation of TNS3 and PTEN, causing them to change their binding preference so that PTEN interacts with DLC1 and TNS3 interacts with p85. The PTEN-DLC1 complex translocates to the posterior of migrating cells to activate RHOA while the TNS3-p85 complex translocates to the leading edge of migrating cells to promote RAC1 activation. The polypeptide is Rho GTPase-activating protein 7 (DLC1) (Homo sapiens (Human)).